Reading from the N-terminus, the 150-residue chain is Small ribosomal subunit protein eS6 (150 aa).

Belongs to the eukaryotic ribosomal protein eS6 family.

This Caldivirga maquilingensis (strain ATCC 700844 / DSM 13496 / JCM 10307 / IC-167) protein is Small ribosomal subunit protein eS6.